We begin with the raw amino-acid sequence, 423 residues long: Gamma-glutamyl phosphate reductase (423 aa).

Belongs to the gamma-glutamyl phosphate reductase family.

Its subcellular location is the cytoplasm. The catalysed reaction is L-glutamate 5-semialdehyde + phosphate + NADP(+) = L-glutamyl 5-phosphate + NADPH + H(+). Its pathway is amino-acid biosynthesis; L-proline biosynthesis; L-glutamate 5-semialdehyde from L-glutamate: step 2/2. Its function is as follows. Catalyzes the NADPH-dependent reduction of L-glutamate 5-phosphate into L-glutamate 5-semialdehyde and phosphate. The product spontaneously undergoes cyclization to form 1-pyrroline-5-carboxylate. The chain is Gamma-glutamyl phosphate reductase from Burkholderia ambifaria (strain MC40-6).